The sequence spans 149 residues: Early lymphoid activation gene protein (149 aa).

As to expression, expressed in heart, kidney, lung, and skeletal muscle, with lower levels in pancreas and liver.

Its function is as follows. May function as an early signal that helps mediate the activation of T-cells. The polypeptide is Early lymphoid activation gene protein (DIAPH2-AS1) (Homo sapiens (Human)).